We begin with the raw amino-acid sequence, 469 residues long: Glutamate--tRNA ligase 1 (469 aa).

The short motif at 8–18 is the 'HIGH' region element; that stretch reads PSPTGYLHIGG. The disordered stretch occupies residues 117 to 137; that stretch reads TPRYDGTWRPEPGKELPPVPA. The 'KMSKS' region signature appears at 240-244; the sequence is KLSKR. ATP is bound at residue K243.

Belongs to the class-I aminoacyl-tRNA synthetase family. Glutamate--tRNA ligase type 1 subfamily. Monomer.

The protein localises to the cytoplasm. It catalyses the reaction tRNA(Glu) + L-glutamate + ATP = L-glutamyl-tRNA(Glu) + AMP + diphosphate. Functionally, catalyzes the attachment of glutamate to tRNA(Glu) in a two-step reaction: glutamate is first activated by ATP to form Glu-AMP and then transferred to the acceptor end of tRNA(Glu). The chain is Glutamate--tRNA ligase 1 from Aliarcobacter butzleri (strain RM4018) (Arcobacter butzleri).